Reading from the N-terminus, the 1503-residue chain is E3 ubiquitin-protein ligase listerin (1503 aa).

HEAT repeat units lie at residues 52 to 89 (SGIDDETRIVMRKLTKKDCQTREKGLRELTNIIAETSS), 93 to 129 (CYEHFCGLVPQLSTDGSPTVRLLTMKTITLFLVKLEK), 133 to 170 (KGLKKIIPMVLFARCDVTNGVAAAAGAVIRDGFEADKK), 280 to 318 (LNTPSIVTYIQNHLDSQTFTPECSTAWEGMIILLPSAQF), 323 to 345 (SLQNGIYPRFLNVIRKKGNHWRV), 346 to 384 (LQHFLLPAVVLLLKEMGSLENNMKVLGTIMESFTDNLPW), 552 to 589 (GDIVRLIKLLLENQEIKSLNISVKNDHVGRRLLLTGGS), 640 to 663 (AENVEFLITLLRKMKSTDVSNEAE), 664 to 700 (KNVLILKLFTAIFESDEDAKSEHYNCLSEHLTSDFNS), 845 to 882 (LEKRYSLVALTEELQRSRREIEERLIRSDEVRFKLDDS), 1022 to 1065 (TLFI…RMFR), 1078 to 1117 (RTLLKAMFTLVEFPTNVPNDSVVTREFVPELSVFKYSLLE), 1141 to 1183 (AAAK…VMIS), and 1302 to 1340 (FKSITLLPAAVRLFHKNIPNNFKPIFQEVVTKHASKLLI). The RING-type zinc finger occupies 1446–1499 (CTICMMTVHQQTNQLPKVKCKQCKNRFHSNCLVSSFHTYKWFESSNQSTCPLCR).

This sequence belongs to the LTN1 family. As to quaternary structure, component of the ribosome quality control complex (RQC), composed of at least the E3 ubiquitin ligase ltn1 and nemf. The complex probably also contains tcf25 as well as vcp/p97 and its ubiquitin-binding cofactors. RQC forms a stable complex with 60S ribosomal subunits.

Its subcellular location is the cytoplasm. The protein localises to the cytosol. The catalysed reaction is S-ubiquitinyl-[E2 ubiquitin-conjugating enzyme]-L-cysteine + [acceptor protein]-L-lysine = [E2 ubiquitin-conjugating enzyme]-L-cysteine + N(6)-ubiquitinyl-[acceptor protein]-L-lysine.. It participates in protein modification; protein ubiquitination. Functionally, E3 ubiquitin-protein ligase. Component of the ribosome quality control complex (RQC), a ribosome-associated complex that mediates ubiquitination and extraction of incompletely synthesized nascent chains for proteasomal degradation. Ubiquitination leads to vcp/p97 recruitment for extraction and degradation of the incomplete translation product. The sequence is that of E3 ubiquitin-protein ligase listerin from Caenorhabditis briggsae.